A 212-amino-acid polypeptide reads, in one-letter code: Synaptosomal-associated protein 25 (212 aa).

2 t-SNARE coiled-coil homology domains span residues 26–88 and 148–210; these read QGVA…LSGM and DARE…AHQL.

It belongs to the SNAP-25 family. As to expression, exclusively found in brain and ganglia.

It localises to the synapse. The protein localises to the synaptosome. In terms of biological role, may play an important role in the synaptic function of specific neuronal systems. Associates with proteins involved in vesicle docking and membrane fusion. The polypeptide is Synaptosomal-associated protein 25 (Snap25) (Drosophila melanogaster (Fruit fly)).